Reading from the N-terminus, the 101-residue chain is Omega-scoloptoxin(10)-Ssd1b (101 aa).

The first 23 residues, 1–23 (MNKLTIIFFTILLLTYIIVEKEA), serve as a signal peptide directing secretion.

Contains 3 disulfide bonds. Expressed by the venom gland.

The protein localises to the secreted. Voltage-gated calcium channel inhibitor. This chain is Omega-scoloptoxin(10)-Ssd1b, found in Scolopendra dehaani (Thai centipede).